We begin with the raw amino-acid sequence, 190 residues long: GTP cyclohydrolase 1 1 (190 aa).

This sequence belongs to the GTP cyclohydrolase I family. Homomer.

It carries out the reaction GTP + H2O = 7,8-dihydroneopterin 3'-triphosphate + formate + H(+). It functions in the pathway cofactor biosynthesis; 7,8-dihydroneopterin triphosphate biosynthesis; 7,8-dihydroneopterin triphosphate from GTP: step 1/1. This Pseudomonas putida (strain ATCC 47054 / DSM 6125 / CFBP 8728 / NCIMB 11950 / KT2440) protein is GTP cyclohydrolase 1 1.